Here is a 623-residue protein sequence, read N- to C-terminus: MSTQDERQINTEYAVSLLEQLKQFYEQQLFTDIVLIVEGTEFPCHKMVLATCSSYFRAMFMSGLSESKQTHVHLRNVDAATLQIIITYAYTGNLAMNDSTVEQLYETACFLQVEDVLQRCREYLIKKINAENCVRLLSFADLFSCEELKQSAKRMVEHKFTAVYHQDAFMQLSHDLLIDILSSDNLNVEKEETVREAAMLWLEYNTESRSQYLSSVLSQIRIDALSEVTQRAWFQGLPPNDKSVVAQGLYKSMPKFFKPRLGMTKEEMMIFIEASSENPCSLYSSVCYSPQAEKVYKLCSPPADLHKVGTVVTPDNDIYIAGGQVPLKNTKTNHSKTSKLQTAFRTVNCFYWFDAQQNTWFPKTPMLFVRIKPSLVCCEGHIYAIGGDSVGGELNRRTVERYDTEKDEWTMVSPLPCAWQWSAAVVVHDCIYVMTLNLMYCYFPRSDSWVEMAMRQTSRSFASAAAFGDKIFYIGGLHIATNSGIRLPSGTVDGSSVTVEIYDVNKNEWKMAANIPAKRYSDPCVRAVVISNSLCVFMRETHLNERAKYVTYQYDLELDRWSLRQHISERVLWDLGRDFRCTVGKLYPSCLEESPWKPPTYLFSTDGTEEFELDGEMVALPPV.

The 68-residue stretch at 31 to 98 (TDIVLIVEGT…AYTGNLAMND (68 aa)) folds into the BTB domain. Positions 133–229 (CVRLLSFADL…IRIDALSEVT (97 aa)) constitute a BACK domain. Position 300 is a phosphoserine (Ser300). Kelch repeat units follow at residues 317 to 380 (DIYI…CCEG), 381 to 429 (HIYA…VVHD), 431 to 469 (IYVMTLNLMYCYFPRSDSWVEMAMRQTSRSFASAAAFGD), 470 to 529 (KIFY…RAVV), and 535 to 581 (CVFM…DFRC).

Component of the BCR(KBTBD2) E3 ubiquitin ligase complex, at least composed of CUL3, KBTBD2 and RBX1. Interacts (via the BTB domain) with CUL3.

Its pathway is protein modification; protein ubiquitination. Its function is as follows. Substrate-specific adapter of a BCR (BTB-CUL3-RBX1) E3 ubiquitin ligase complex that acts as a regulator of the insulin signaling pathway, modulating insulin sensitivity by limiting PIK3R1/p85alpha abundance in adipocytes. Targets PIK3R1, the regulatory subunit of phosphatidylinositol 3-kinase (PI3K), for 'Lys-48'-linked polyubiquitination and proteasome-mediated degradation. The sequence is that of Kelch repeat and BTB domain-containing protein 2 (KBTBD2) from Pongo abelii (Sumatran orangutan).